A 448-amino-acid polypeptide reads, in one-letter code: tRNA-2-methylthio-N(6)-dimethylallyladenosine synthase (448 aa).

Residues 3 to 120 (KKLFIKTHGC…LPTMLDSRQG (118 aa)) form the MTTase N-terminal domain. [4Fe-4S] cluster contacts are provided by cysteine 12, cysteine 49, cysteine 83, cysteine 158, cysteine 162, and cysteine 165. In terms of domain architecture, Radical SAM core spans 144-376 (TSDGATAFVS…QERLNQQTMQ (233 aa)). The 66-residue stretch at 379–444 (RRMVGNTERI…PNSLRGDLAS (66 aa)) folds into the TRAM domain.

It belongs to the methylthiotransferase family. MiaB subfamily. As to quaternary structure, monomer. Requires [4Fe-4S] cluster as cofactor.

It localises to the cytoplasm. It catalyses the reaction N(6)-dimethylallyladenosine(37) in tRNA + (sulfur carrier)-SH + AH2 + 2 S-adenosyl-L-methionine = 2-methylsulfanyl-N(6)-dimethylallyladenosine(37) in tRNA + (sulfur carrier)-H + 5'-deoxyadenosine + L-methionine + A + S-adenosyl-L-homocysteine + 2 H(+). In terms of biological role, catalyzes the methylthiolation of N6-(dimethylallyl)adenosine (i(6)A), leading to the formation of 2-methylthio-N6-(dimethylallyl)adenosine (ms(2)i(6)A) at position 37 in tRNAs that read codons beginning with uridine. The sequence is that of tRNA-2-methylthio-N(6)-dimethylallyladenosine synthase from Chromohalobacter salexigens (strain ATCC BAA-138 / DSM 3043 / CIP 106854 / NCIMB 13768 / 1H11).